We begin with the raw amino-acid sequence, 256 residues long: Thiazole synthase (256 aa).

Lys95 serves as the catalytic Schiff-base intermediate with DXP. 1-deoxy-D-xylulose 5-phosphate-binding positions include Gly156, 182 to 183 (AG), and 204 to 205 (NT).

The protein belongs to the ThiG family. In terms of assembly, homotetramer. Forms heterodimers with either ThiH or ThiS.

Its subcellular location is the cytoplasm. The catalysed reaction is [ThiS sulfur-carrier protein]-C-terminal-Gly-aminoethanethioate + 2-iminoacetate + 1-deoxy-D-xylulose 5-phosphate = [ThiS sulfur-carrier protein]-C-terminal Gly-Gly + 2-[(2R,5Z)-2-carboxy-4-methylthiazol-5(2H)-ylidene]ethyl phosphate + 2 H2O + H(+). The protein operates within cofactor biosynthesis; thiamine diphosphate biosynthesis. Catalyzes the rearrangement of 1-deoxy-D-xylulose 5-phosphate (DXP) to produce the thiazole phosphate moiety of thiamine. Sulfur is provided by the thiocarboxylate moiety of the carrier protein ThiS. In vitro, sulfur can be provided by H(2)S. This chain is Thiazole synthase, found in Salmonella enteritidis PT4 (strain P125109).